Here is a 1481-residue protein sequence, read N- to C-terminus: MQRSPLEKASVVSKLFFSWTRPILRKGYRQRLELSDIYQIPSADSADNLSEKLEREWDRELASKKNPKLINALRRCFFWRFMFYGILLYLGEVTKAVQPLLLGRIIASYDPDNKEERSIAIYLGIGLCLLFIVRTLLLHPAIFGLHHIGMQMRIAMFSLIYKKTLKLSSRVLDKISIGQLVSLLSNNLNKFDEGLALAHFVWIVPLQVALLMGLIWELLQASAFCGLGFLIVLALFQAGLGRMMMKYRDQRAGKINERLVITSEMIENIQSVKAYCWEEAMEKMIENLRQTELKLTRKAAYVRYFNSSAFFFSGFFVVFLSVLPYALIKGIVLRKIFTTISFCIVLRMAVTRQFPWAVQTWYDSLGAINKIQDFLQKQEYKTLEYNLTTTEVVMENVTAFWEEGFGELFEKAKQNNSNRKTSNDDDSLFFSNFSLLGTPVLKDINFKIERGQLLAVAGSTGAGKTSLLMMIMGELEPSEGKIKHSGRISFCSQFSWIMPGTIKENIIFGVSYDEYRYRSVIKACQLEEDISKFAEKDNIVLGEGGITLSGGQRARISLARAVYKDADLYLLDSPFGYLDVLTEKEIFESCVCKLMANKTRILVTSKMEHLKKADKILILHEGSSYFYGTFSELQNLRPDFSSKLMGYDSFDQFSAERRNSILTETLRRFSLEGDAPVSWTETKKQSFKQTGEFGEKRKNSILNPINSVRKFSIVQKTPLQMNGIEEDSDEPLERRLSLVPDSEQGEVILPRISVISTGPTLQARRRQSVLNLMTHSVNQGHSIHRKTAASTRKVSLAPQANLTELDIYSRRLSQETGLEISEEINEEDLKECFFDDMESIPAVTTWNTYLRYITVHKSLIFVLIWCLVIFLAEVAASLVVLWFLGNTPPQDKGNSTYSRNNSYAVIITRTSSYYVFYIYVGVADTLLAMGFFRGLPLVHTLITVSKILHHKMLHSVLQAPMSTLNTLKAGGILNRFSKDIAILDDLLPLTIFDFIQLLLIVIGAIAVVAVLQPYIFVATVPVIVAFIMLRAYFLQTSQQLKQLESEGRSPIFTHLVTSLKGLWTLRAFGRQPYFETLFHKALNLHTANWFLYLSTLRWFQMRIEMIFVIFFIAVTFISILTTGEGEGTVGIILTLAMNIMSTLQWAVNSSIDVDSLMRSVSRVFKFIDMPTEEGKPTRSTKPYKNGQLSKVMIIENSHVKKDDIWPSGGQMTVKDLTAKYTEGGNPILENISFSISPGQRVGLLGRTGSGKSTLLSAFLRLLNTEGEIQIDGVSWDSITLQQWRKAFGVIPQKVFIFSGTFRKNLDPYEQWSDQEIWEVADEVGLRSVIEQFPGKLDFVLVDGGCVLSHGHKQLMCLARSVLSKAKILLLDEPSAHLDPVTYQIIRRTLKQAFADCTVILCEHRIEAMLECQQFLVIEENKVRQYDSIQKLLNERSLFRQAISPSDRVKLFPHRNSSKCKSQPQIAALKEETEEEVQDTRL.

Over 1–77 (MQRSPLEKAS…KLINALRRCF (77 aa)) the chain is Cytoplasmic. Residues 78-98 (FWRFMFYGILLYLGEVTKAVQ) traverse the membrane as a helical segment. The ABC transmembrane type-1 1 domain occupies 81–365 (FMFYGILLYL…WAVQTWYDSL (285 aa)). The Extracellular segment spans residues 99-122 (PLLLGRIIASYDPDNKEERSIAIY). Residues 123–146 (LGIGLCLLFIVRTLLLHPAIFGLH) traverse the membrane as a helical segment. The Cytoplasmic segment spans residues 147–195 (HIGMQMRIAMFSLIYKKTLKLSSRVLDKISIGQLVSLLSNNLNKFDEGL). A helical transmembrane segment spans residues 196-216 (ALAHFVWIVPLQVALLMGLIW). Residues 217-222 (ELLQAS) lie on the Extracellular side of the membrane. Residues 223 to 243 (AFCGLGFLIVLALFQAGLGRM) form a helical membrane-spanning segment. The Cytoplasmic portion of the chain corresponds to 244–298 (MMKYRDQRAGKINERLVITSEMIENIQSVKAYCWEEAMEKMIENLRQTELKLTRK). Residues 299–319 (AAYVRYFNSSAFFFSGFFVVF) form a helical membrane-spanning segment. The Extracellular segment spans residues 320-339 (LSVLPYALIKGIVLRKIFTT). The helical transmembrane segment at 340-358 (ISFCIVLRMAVTRQFPWAV) threads the bilayer. Over 359-858 (QTWYDSLGAI…YLRYITVHKS (500 aa)) the chain is Cytoplasmic. Residues tryptophan 401, serine 434, 458 to 465 (GSTGAGKT), and glutamine 493 each bind ATP. Residues 423–646 (NDDDSLFFSN…RPDFSSKLMG (224 aa)) form the ABC transporter 1 domain. A lipid anchor (S-palmitoyl cysteine) is attached at cysteine 524. A phosphoserine mark is found at serine 549 and serine 660. Residues 654–831 (SAERRNSILT…EEINEEDLKE (178 aa)) form a disordered R region region. Serine 670 bears the Phosphoserine; by PKA mark. Serine 686 carries the phosphoserine modification. A Glycyl lysine isopeptide (Lys-Gly) (interchain with G-Cter in ubiquitin) cross-link involves residue lysine 688. Phosphoserine is present on residues serine 700 and serine 712. Threonine 717 bears the Phosphothreonine mark. 6 positions are modified to phosphoserine: serine 737, serine 753, serine 768, serine 790, serine 795, and serine 813. Residues 859-879 (LIFVLIWCLVIFLAEVAASLV) traverse the membrane as a helical segment. One can recognise an ABC transmembrane type-1 2 domain in the interval 859-1155 (LIFVLIWCLV…AVNSSIDVDS (297 aa)). At 880–918 (VLWFLGNTPPQDKGNSTYSRNNSYAVIITRTSSYYVFYI) the chain is on the extracellular side. Asparagine 894 and asparagine 900 each carry an N-linked (GlcNAc...) asparagine glycan. The discontinuously helical transmembrane segment at 919 to 939 (YVGVADTLLAMGFFRGLPLVH) threads the bilayer. Over 940 to 990 (TLITVSKILHHKMLHSVLQAPMSTLNTLKAGGILNRFSKDIAILDDLLPLT) the chain is Cytoplasmic. Residues 991 to 1011 (IFDFIQLLLIVIGAIAVVAVL) traverse the membrane as a helical segment. Over 1012-1013 (QP) the chain is Extracellular. Residues 1014-1034 (YIFVATVPVIVAFIMLRAYFL) form a helical membrane-spanning segment. The Cytoplasmic portion of the chain corresponds to 1035 to 1095 (QTSQQLKQLE…TANWFLYLST (61 aa)). A helical membrane pass occupies residues 1096–1116 (LRWFQMRIEMIFVIFFIAVTF). The Extracellular portion of the chain corresponds to 1117–1130 (ISILTTGEGEGTVG). A helical membrane pass occupies residues 1131 to 1151 (IILTLAMNIMSTLQWAVNSSI). Residues 1152 to 1481 (DVDSLMRSVS…TEEEVQDTRL (330 aa)) lie on the Cytoplasmic side of the membrane. The region spanning 1211–1444 (MTVKDLTAKY…RSLFRQAISP (234 aa)) is the ABC transporter 2 domain. Residues tyrosine 1220 and 1245–1252 (GRTGSGKS) contribute to the ATP site. Residues 1387–1481 (RTLKQAFADC…TEEEVQDTRL (95 aa)) are interaction with GORASP2. Cysteine 1396 carries S-palmitoyl cysteine lipidation. A phosphoserine mark is found at serine 1445 and serine 1457. The disordered stretch occupies residues 1462-1481 (QPQIAALKEETEEEVQDTRL). Over residues 1471 to 1481 (ETEEEVQDTRL) the composition is skewed to acidic residues. A PDZ-binding motif is present at residues 1479–1481 (TRL).

Belongs to the ABC transporter superfamily. ABCC family. CFTR transporter (TC 3.A.1.202) subfamily. As to quaternary structure, monomer; does not require oligomerization for channel activity. May form oligomers in the membrane. Interacts with SLC26A3, SLC26A6 and NHERF1. Interacts with SHANK2. Interacts with MYO6. Interacts (via C-terminus) with GOPC (via PDZ domain); this promotes CFTR internalization and thereby decreases channel activity. Interacts with SLC4A7 through NHERF1. Found in a complex with MYO5B and RAB11A. Interacts with ANO1. Interacts with SLC26A8. Interacts with AHCYL1; the interaction increases CFTR activity. Interacts with CSE1L. The core-glycosylated form interacts with GORASP2 (via PDZ GRASP-type 1 domain) in respone to ER stress. Interacts with MARCHF2; the interaction leads to CFTR ubiqtuitination and degradation. Interacts with ADGRG2. N-glycosylated. Post-translationally, phosphorylated; cAMP treatment promotes phosphorylation and activates the channel. Dephosphorylation decreases the ATPase activity (in vitro). Phosphorylation at PKA sites activates the channel. Phosphorylation at PKC sites enhances the response to phosphorylation by PKA. Phosphorylated by AMPK; this inhibits channel activity. In terms of processing, ubiquitinated, leading to its degradation in the lysosome. Deubiquitination by USP10 in early endosomes enhances its endocytic recycling to the cell membrane. Ubiquitinated by RNF185 during ER stress. Ubiquitinated by MARCHF2.

The protein resides in the apical cell membrane. It is found in the early endosome membrane. Its subcellular location is the cell membrane. It localises to the recycling endosome membrane. The protein localises to the endoplasmic reticulum membrane. The protein resides in the nucleus. It catalyses the reaction ATP + H2O + closed Cl(-) channel = ADP + phosphate + open Cl(-) channel.. The catalysed reaction is chloride(in) = chloride(out). The enzyme catalyses hydrogencarbonate(in) = hydrogencarbonate(out). It carries out the reaction ATP + H2O = ADP + phosphate + H(+). Functionally, epithelial ion channel that plays an important role in the regulation of epithelial ion and water transport and fluid homeostasis. Mediates the transport of chloride ions across the cell membrane. Possesses an intrinsic ATPase activity and utilizes ATP to gate its channel; the passive flow of anions through the channel is gated by cycles of ATP binding and hydrolysis by the ATP-binding domains. The ion channel is also permeable to HCO(3)(-); selectivity depends on the extracellular chloride concentration. Exerts its function also by modulating the activity of other ion channels and transporters. Contributes to the regulation of the pH and the ion content of the epithelial fluid layer. Modulates the activity of the epithelial sodium channel (ENaC) complex, in part by regulating the cell surface expression of the ENaC complex. May regulate bicarbonate secretion and salvage in epithelial cells by regulating the transporter SLC4A7. Can inhibit the chloride channel activity of ANO1. Plays a role in the chloride and bicarbonate homeostasis during sperm epididymal maturation and capacitation. The sequence is that of Cystic fibrosis transmembrane conductance regulator from Chlorocebus aethiops (Green monkey).